Reading from the N-terminus, the 182-residue chain is Large ribosomal subunit protein uL5c (182 aa).

It belongs to the universal ribosomal protein uL5 family. In terms of assembly, part of the 50S ribosomal subunit; contacts the 5S rRNA.

The protein localises to the plastid. It localises to the chloroplast. Functionally, binds 5S rRNA, forms part of the central protuberance of the 50S subunit. In Cyanidium caldarium (Red alga), this protein is Large ribosomal subunit protein uL5c (rpl5).